The primary structure comprises 287 residues: Phosphatidylserine decarboxylase proenzyme (287 aa).

Active-site charge relay system; for autoendoproteolytic cleavage activity residues include aspartate 89, histidine 146, and serine 252. Residue serine 252 is the Schiff-base intermediate with substrate; via pyruvic acid; for decarboxylase activity of the active site. At serine 252 the chain carries Pyruvic acid (Ser); by autocatalysis.

This sequence belongs to the phosphatidylserine decarboxylase family. PSD-B subfamily. Prokaryotic type I sub-subfamily. As to quaternary structure, heterodimer of a large membrane-associated beta subunit and a small pyruvoyl-containing alpha subunit. Requires pyruvate as cofactor. Is synthesized initially as an inactive proenzyme. Formation of the active enzyme involves a self-maturation process in which the active site pyruvoyl group is generated from an internal serine residue via an autocatalytic post-translational modification. Two non-identical subunits are generated from the proenzyme in this reaction, and the pyruvate is formed at the N-terminus of the alpha chain, which is derived from the carboxyl end of the proenzyme. The autoendoproteolytic cleavage occurs by a canonical serine protease mechanism, in which the side chain hydroxyl group of the serine supplies its oxygen atom to form the C-terminus of the beta chain, while the remainder of the serine residue undergoes an oxidative deamination to produce ammonia and the pyruvoyl prosthetic group on the alpha chain. During this reaction, the Ser that is part of the protease active site of the proenzyme becomes the pyruvoyl prosthetic group, which constitutes an essential element of the active site of the mature decarboxylase.

The protein localises to the cell membrane. It carries out the reaction a 1,2-diacyl-sn-glycero-3-phospho-L-serine + H(+) = a 1,2-diacyl-sn-glycero-3-phosphoethanolamine + CO2. Its pathway is phospholipid metabolism; phosphatidylethanolamine biosynthesis; phosphatidylethanolamine from CDP-diacylglycerol: step 2/2. Catalyzes the formation of phosphatidylethanolamine (PtdEtn) from phosphatidylserine (PtdSer). In Shewanella halifaxensis (strain HAW-EB4), this protein is Phosphatidylserine decarboxylase proenzyme.